Consider the following 449-residue polypeptide: MFS acetylaranotin efflux transporter ataA (449 aa).

7 consecutive transmembrane segments (helical) span residues 6–26 (SVYV…TAIP), 45–65 (YLLV…YFPI), 67–87 (WVFL…GAAP), 115–135 (FYIN…FLHV), 155–175 (LGVV…QWGG), 182–202 (NGRI…FLAI), and 227–247 (LFMT…PIWF). An N-linked (GlcNAc...) asparagine glycan is attached at N252. Transmembrane regions (helical) follow at residues 260 to 280 (IMCL…GGGV), 287 to 307 (VPFF…MTTF), 321 to 341 (VLLG…VQAV), 349 to 369 (VGTA…VSVA), and 420 to 440 (ALVS…LGAV).

Belongs to the major facilitator superfamily.

The protein resides in the cell membrane. Its function is as follows. Efflux pump that may provide the dual role of acetylaranotin export and self-protection by allowing the fungus to evade the harmful effect of its own acetylaranotin production. The protein is MFS acetylaranotin efflux transporter ataA of Aspergillus terreus (strain NIH 2624 / FGSC A1156).